Consider the following 506-residue polypeptide: Protein spinster homolog 1 (506 aa).

Positions 1–42 (MSQADADITPFFADDNEGEGPVENGVGSPLPEDEEEESPSGV) are disordered. The span at 21 to 30 (PVENGVGSPL) shows a compositional bias: low complexity. Transmembrane regions (helical) follow at residues 52–71 (IVLC…VAGV), 87–107 (GLLQ…FGYL), 115–135 (LIMC…SFIG), 149–169 (VGVG…DLFV), 176–196 (MLSI…IVGS), 207–227 (WALR…MLVV), 266–286 (FGFT…PAFL), 310–330 (LIFG…GVQA), 344–364 (LVCA…IMFA), 373–393 (VFIF…ADIL), 408–428 (FQIV…IGVV), and 450–470 (LLCS…AVFI).

It belongs to the major facilitator superfamily. Spinster (TC 2.A.1.49) family. Expressed in yolk cells.

The protein localises to the lysosome membrane. The enzyme catalyses a 1-acyl-sn-glycero-3-phosphocholine(out) + H(+)(out) = a 1-acyl-sn-glycero-3-phosphocholine(in) + H(+)(in). It carries out the reaction a 1-acyl-sn-glycero-3-phosphoethanolamine(out) + H(+)(out) = a 1-acyl-sn-glycero-3-phosphoethanolamine(in) + H(+)(in). The catalysed reaction is a 1-O-(1Z-alkenyl)-sn-glycero-3-phosphocholine(out) + H(+)(out) = a 1-O-(1Z-alkenyl)-sn-glycero-3-phosphocholine(in) + H(+)(in). It catalyses the reaction a 1-O-(1Z-alkenyl)-sn-glycero-3-phosphoethanolamine(out) + H(+)(out) = a 1-O-(1Z-alkenyl)-sn-glycero-3-phosphoethanolamine(in) + H(+)(in). Its function is as follows. Mediates the rate-limiting, proton-dependent, lysosomal efflux of lysophospholipids. Selective for zwitterionic headgroups such as lysophosphatidylcholine (LPC) and lysophosphatidylethanolamine (LPE). Essential player in lysosomal homeostasis. Critical for embryogenesis. Involved in the regulation of developmental senescence. This is Protein spinster homolog 1 (spns1) from Danio rerio (Zebrafish).